Here is a 574-residue protein sequence, read N- to C-terminus: MHAVRYSQAFIPTLKEAPADAQVASHKLLVRAGFIRQLGAGIYDYLPLAKRSLAKVEAIVREEMDAIGGQEFYLPALHPAEIWKESGRWDVMGDNMFRLKDRKGGDYCLGMTHEEIFTAVARDELRSYRQLPQVWYQIQTKFRDEPRPKSGLLRVRQFTMKDAYSFDVDRAGLDRSYEDQRRAYEKIFTRCGLDFVAVQAHSGSMGGSESSEFMVRTEAGEDLVAACPRCRYAANTETATSRVAAEADGPGLGAPEKFATPGVVTIEALEQAPHSVPARRQLKTLVYMADEKPVIAVVRGDQELNEAKLQTATGAVAVRPAHPEEIPPLMGARAGSLGAVRFTRARVLVDPSLADRKDMVTGANEDGFHLRGVDVRRDVLAHGATLAELRTVKAGEGCPRCDGTLDVFKALEIGHIFKLGTKYSESMKATVLDAEGKQVPIVMGSYGIGVERILAAAIELHHDDNGIVFPMAIAPFHATVLTLGPEPELRKAAEEVVAALGKEGVEVLFDDRDERAGVKFKDADLLGIPIRIAVGKKGLAAGNVEWKLRKGGAVELVPVGEVARKAAEAVRAAT.

It belongs to the class-II aminoacyl-tRNA synthetase family. ProS type 1 subfamily. Homodimer.

The protein localises to the cytoplasm. The catalysed reaction is tRNA(Pro) + L-proline + ATP = L-prolyl-tRNA(Pro) + AMP + diphosphate. Functionally, catalyzes the attachment of proline to tRNA(Pro) in a two-step reaction: proline is first activated by ATP to form Pro-AMP and then transferred to the acceptor end of tRNA(Pro). As ProRS can inadvertently accommodate and process non-cognate amino acids such as alanine and cysteine, to avoid such errors it has two additional distinct editing activities against alanine. One activity is designated as 'pretransfer' editing and involves the tRNA(Pro)-independent hydrolysis of activated Ala-AMP. The other activity is designated 'posttransfer' editing and involves deacylation of mischarged Ala-tRNA(Pro). The misacylated Cys-tRNA(Pro) is not edited by ProRS. The protein is Proline--tRNA ligase of Anaeromyxobacter sp. (strain K).